The following is a 234-amino-acid chain: uncharacterized protein (234 aa).

Helical transmembrane passes span 20–40 (LILLITIGVTLIMGFVQFKVI) and 176–196 (VMAFGAAVMGGITLAFFLHFL).

Belongs to the CpsC/CapA family.

The protein resides in the cell membrane. This is an uncharacterized protein from Bacillus subtilis (strain 168).